Here is a 199-residue protein sequence, read N- to C-terminus: MANRGPAYGLSREVQQKIEKQYDADLEQILIQWITTQCRKDVGRPQPGRENFQNWLKDGTVLCELINALYPEGQAPVKKIQASTMAFKQMEQISQFLQAAERYGINTTDIFQTVDLWEGKNMACVQRTLMNLGGLAVARDDGLFSGDPNWFPKKSKENPRNFSDNQLQEGKNVIGLQMGTNRGASQAGMTGYGMPRQIL.

Ala-2 carries the post-translational modification N-acetylalanine. Ser-11 carries the post-translational modification Phosphoserine. An N6-acetyllysine mark is found at Lys-17 and Lys-20. The 113-residue stretch at 24–136 folds into the Calponin-homology (CH) domain; sequence ADLEQILIQW…RTLMNLGGLA (113 aa). Ser-163 is modified (phosphoserine). A Glycyl lysine isopeptide (Lys-Gly) (interchain with G-Cter in SUMO2) cross-link involves residue Lys-171. The stretch at 174–199 is one Calponin-like repeat; it reads IGLQMGTNRGASQAGMTGYGMPRQIL. Thr-180 is subject to Phosphothreonine. 2 positions are modified to omega-N-methylarginine: Arg-182 and Arg-196.

The protein belongs to the calponin family. In terms of tissue distribution, expressed in epididymis (at protein level).

This Homo sapiens (Human) protein is Transgelin-2 (TAGLN2).